A 196-amino-acid chain; its full sequence is Probable DNA-directed RNA polymerase subunit delta (196 aa).

The HTH HARE-type domain occupies 14–81 (LSMIEVAHEI…GDNVWGLRSW (68 aa)). Over residues 119-150 (DDDDVIDYDDDDPEDEDLDNDYDDEDDDDDEG) the composition is skewed to acidic residues. Residues 119 to 196 (DDDDVIDYDD…DADLDEENQD (78 aa)) are disordered. The segment covering 151-161 (SHELKQYTKDL) has biased composition (basic and acidic residues). Acidic residues-rich tracts occupy residues 162–176 (DDIDDGDDPEDELAD) and 186–196 (SDADLDEENQD).

This sequence belongs to the RpoE family. In terms of assembly, RNAP is composed of a core of 2 alpha, a beta and a beta' subunits. The core is associated with a delta subunit and one of several sigma factors.

Functionally, participates in both the initiation and recycling phases of transcription. In the presence of the delta subunit, RNAP displays an increased specificity of transcription, a decreased affinity for nucleic acids, and an increased efficiency of RNA synthesis because of enhanced recycling. This chain is Probable DNA-directed RNA polymerase subunit delta, found in Ligilactobacillus salivarius (strain UCC118) (Lactobacillus salivarius).